The sequence spans 211 residues: 2,3-bisphosphoglycerate-dependent phosphoglycerate mutase (211 aa).

Residues 9–16 (RHGQSEWN), 22–23 (TG), R61, 88–91 (ERDY), K99, 115–116 (RR), and 159–160 (GN) each bind substrate. H10 serves as the catalytic Tele-phosphohistidine intermediate. E88 functions as the Proton donor/acceptor in the catalytic mechanism.

Belongs to the phosphoglycerate mutase family. BPG-dependent PGAM subfamily. Homodimer.

The enzyme catalyses (2R)-2-phosphoglycerate = (2R)-3-phosphoglycerate. The protein operates within carbohydrate degradation; glycolysis; pyruvate from D-glyceraldehyde 3-phosphate: step 3/5. Its function is as follows. Catalyzes the interconversion of 2-phosphoglycerate and 3-phosphoglycerate. In Sinorhizobium fredii (strain NBRC 101917 / NGR234), this protein is 2,3-bisphosphoglycerate-dependent phosphoglycerate mutase.